The sequence spans 104 residues: Large ribosomal subunit protein uL23 (104 aa).

The protein belongs to the universal ribosomal protein uL23 family. Part of the 50S ribosomal subunit. Contacts protein L29, and trigger factor when it is bound to the ribosome.

Functionally, one of the early assembly proteins it binds 23S rRNA. One of the proteins that surrounds the polypeptide exit tunnel on the outside of the ribosome. Forms the main docking site for trigger factor binding to the ribosome. The protein is Large ribosomal subunit protein uL23 of Polynucleobacter necessarius subsp. necessarius (strain STIR1).